We begin with the raw amino-acid sequence, 95 residues long: Aspartyl/glutamyl-tRNA(Asn/Gln) amidotransferase subunit C (95 aa).

The protein belongs to the GatC family. In terms of assembly, heterotrimer of A, B and C subunits.

It catalyses the reaction L-glutamyl-tRNA(Gln) + L-glutamine + ATP + H2O = L-glutaminyl-tRNA(Gln) + L-glutamate + ADP + phosphate + H(+). It carries out the reaction L-aspartyl-tRNA(Asn) + L-glutamine + ATP + H2O = L-asparaginyl-tRNA(Asn) + L-glutamate + ADP + phosphate + 2 H(+). Its function is as follows. Allows the formation of correctly charged Asn-tRNA(Asn) or Gln-tRNA(Gln) through the transamidation of misacylated Asp-tRNA(Asn) or Glu-tRNA(Gln) in organisms which lack either or both of asparaginyl-tRNA or glutaminyl-tRNA synthetases. The reaction takes place in the presence of glutamine and ATP through an activated phospho-Asp-tRNA(Asn) or phospho-Glu-tRNA(Gln). The sequence is that of Aspartyl/glutamyl-tRNA(Asn/Gln) amidotransferase subunit C from Bartonella henselae (strain ATCC 49882 / DSM 28221 / CCUG 30454 / Houston 1) (Rochalimaea henselae).